The following is a 287-amino-acid chain: Pyridoxal kinase PdxY (287 aa).

Substrate-binding positions include serine 10 and 45–46 (TQ). ATP contacts are provided by residues aspartate 112, alanine 144, glutamate 149, lysine 182, and 209-212 (RPLV). Aspartate 224 contacts substrate.

The protein belongs to the pyridoxine kinase family. PdxY subfamily. Homodimer. It depends on Mg(2+) as a cofactor.

The enzyme catalyses pyridoxal + ATP = pyridoxal 5'-phosphate + ADP + H(+). It participates in cofactor metabolism; pyridoxal 5'-phosphate salvage; pyridoxal 5'-phosphate from pyridoxal: step 1/1. Pyridoxal kinase involved in the salvage pathway of pyridoxal 5'-phosphate (PLP). Catalyzes the phosphorylation of pyridoxal to PLP. In Escherichia coli O6:H1 (strain CFT073 / ATCC 700928 / UPEC), this protein is Pyridoxal kinase PdxY.